Reading from the N-terminus, the 439-residue chain is Methylenetetrahydrofolate--tRNA-(uracil-5-)-methyltransferase TrmFO (439 aa).

Position 8–13 (8–13 (GGGLAG)) interacts with FAD.

It belongs to the MnmG family. TrmFO subfamily. FAD serves as cofactor.

Its subcellular location is the cytoplasm. It catalyses the reaction uridine(54) in tRNA + (6R)-5,10-methylene-5,6,7,8-tetrahydrofolate + NADH + H(+) = 5-methyluridine(54) in tRNA + (6S)-5,6,7,8-tetrahydrofolate + NAD(+). The catalysed reaction is uridine(54) in tRNA + (6R)-5,10-methylene-5,6,7,8-tetrahydrofolate + NADPH + H(+) = 5-methyluridine(54) in tRNA + (6S)-5,6,7,8-tetrahydrofolate + NADP(+). Functionally, catalyzes the folate-dependent formation of 5-methyl-uridine at position 54 (M-5-U54) in all tRNAs. This is Methylenetetrahydrofolate--tRNA-(uracil-5-)-methyltransferase TrmFO from Dictyoglomus thermophilum (strain ATCC 35947 / DSM 3960 / H-6-12).